We begin with the raw amino-acid sequence, 536 residues long: B3 domain-containing protein Os03g0619800 (536 aa).

The segment at residues 26–119 is a DNA-binding region (TF-B3 1); the sequence is MRCFLRRMAA…RYEVLILDSD (94 aa). The interval 138–199 is disordered; sequence DKTVDPVDSS…VEPQTPSGSD (62 aa). 2 stretches are compositionally biased toward low complexity: residues 145 to 160 and 171 to 183; these read DSSG…SSRS and SSSE…SPSG. Positions 231 to 330 form a DNA-binding region, TF-B3 2; that stretch reads VAVMKKCNLQ…AFTVHLLQAE (100 aa). The tract at residues 335-396 is disordered; the sequence is RDGTDVHKIG…SDGPSEPPYI (62 aa). The segment covering 344–355 has biased composition (polar residues); it reads GSSQNKRNSKMA. The span at 372-382 shows a compositional bias: basic and acidic residues; that stretch reads SNKHGVSHESL. Positions 429 to 529 form a DNA-binding region, TF-B3 3; the sequence is ISKLAGSGGK…TMEVHIISNL (101 aa).

It localises to the nucleus. The sequence is that of B3 domain-containing protein Os03g0619800 from Oryza sativa subsp. japonica (Rice).